The following is an 896-amino-acid chain: MIKFYFTTFHMKFPARLFSTSFTLNNTNIINEKDVKYITKNFLLENSNGFNLIKNIINSDETSEVKQNKIEVELNNIWHTEITDILQKKRSLGLDAIGSSILAKDFHNLIGDIENFINKGRTNKLPGVEYLKPSLIISIVLGKVIPFSLRHSDIFNQPTHSLFAEIGKILKYQSIFELHHRIGLIQNRVEEIKNYTEKKLVSEFNKLTKVLDEYKNTLKNLEELSGESIIKVGLGFTALLSETSEFYSLEEQIIAKNKSIRYIIPKNKLKTLINNITLMDTIELPMIIPPLEWKIDDNEKIIEYGGTILNNKHRIRPLRTKSVENSDANDMTYNKELVDAVNFKSKIPYTINLKILDFITRDEFINRDKKDNVIIYKHIHPDSALLGEYMKDRKNPKISEITTHNSKFLYHSSIISIAKLMKDVKEFYMTVFIDWRGRFYTSSCALNIQGGELARSLLLFKEGQKLNDIGLKALKIYTANAFGLDKRSKEERLDWVEQNLHKIIDIDNYEIWREADEPLLFLACALELKGYNEDPNFISHLPILMDATCNGLQHLSAMVNDFVLAEKVNLLKSTENDNPRDLYSEVIPHIKQEILEASKSYEHTNLERINVERCLVKRGLMTITYGATERGIYDQIVSKFFQKDEWNKTVGLHFVCIDSDIAPKDVVFTQKNILLLSKIIYNSLFKIHPNLNTLMVYFNSIVKVLCELDLPVNWVTPYGLVIQQKYNKFTKYNETTYVASKRYKLVLRKADTTSISKQKQIQAFIPNFVHSMDGSNIVLLINTIRDEGRKINFASIHDCFATHANDTAWLSWYVKQSFIRIYSDSSFLRRFHNYIQLRIQAKYGEDAHFDKDGVLTHVTIDNGTDIPDRIDIPKPLVVNKDNKIYKEILHSEYFIN.

Residues Asp-546, Lys-617, and Asp-798 contribute to the active site.

This sequence belongs to the phage and mitochondrial RNA polymerase family.

The protein localises to the mitochondrion. The catalysed reaction is RNA(n) + a ribonucleoside 5'-triphosphate = RNA(n+1) + diphosphate. DNA-dependent RNA polymerase catalyzes the transcription of DNA into RNA using the four ribonucleoside triphosphates as substrates. The protein is Probable DNA-directed RNA polymerase of Neurospora crassa.